The chain runs to 301 residues: Retinochrome (301 aa).

The Extracellular portion of the chain corresponds to 1-17 (MFGNPAMTGLHQFTMWE). The chain crosses the membrane as a helical span at residues 18–43 (HYFTGSIYLVLGCVVFSLCGMCIIFL). Residues 44 to 54 (ARQSPKPRRKY) are Cytoplasmic-facing. The helical transmembrane segment at 55 to 76 (AILIHVLITAMAVNGGDPAHAS) threads the bilayer. Residues 77-94 (SSIVGRWLYGSVGCQLMG) are Extracellular-facing. A helical membrane pass occupies residues 95–120 (FWGFFGGMSHIWMLFAFAMERYMAVC). At 121 to 132 (HREFYQQMPSVY) the chain is on the cytoplasmic side. A helical membrane pass occupies residues 133-153 (YSIIVGLMYTFGTFWATMPLL). At 154 to 180 (GWASYGLEVHGTSCTINYSVSDESYQS) the chain is on the extracellular side. An N-linked (GlcNAc...) asparagine glycan is attached at Asn-170. Residues 181–208 (YVFFLAIFSFIFPMVSGWYAISKAWSGL) traverse the membrane as a helical segment. Residues 209–230 (SAIPDAEKEKDKDILSEEQLTA) lie on the Cytoplasmic side of the membrane. A helical transmembrane segment spans residues 231–255 (LAGAFILISLISWSGFGYVAIYSAL). The Extracellular portion of the chain corresponds to 256–264 (THGGAQLSH). A helical membrane pass occupies residues 265–289 (LRGHVPPIMSKTGCALFPLLIFLLT). N6-(retinylidene)lysine is present on Lys-275. The Cytoplasmic segment spans residues 290 to 301 (ARSLPKSDTKKP).

The protein belongs to the G-protein coupled receptor 1 family. Opsin subfamily. Mainly stored in myeloid bodies of the inner segments.

It is found in the membrane. In terms of biological role, retinochrome is capable of acting as an effective catalyst in the light to convert various isomers of retinal into 11-cis, the form that is required by opsin to resynthesize rhodopsin. This Todarodes pacificus (Japanese flying squid) protein is Retinochrome.